The primary structure comprises 187 residues: UPF0301 protein CT0663 (187 aa).

It belongs to the UPF0301 (AlgH) family.

The sequence is that of UPF0301 protein CT0663 from Chlorobaculum tepidum (strain ATCC 49652 / DSM 12025 / NBRC 103806 / TLS) (Chlorobium tepidum).